The following is a 125-amino-acid chain: MPTISQLIGSERKRLTRKTKSPALKSCPERRGVCTRVYTSTPKKPNSALRKVARVRLTSGFEVTAYIPGIGHNLQEHSVVLLRGGRVKDLPGVRYHIIRGTLDTAGVKDRRQSRSKYGAKAPKND.

The disordered stretch occupies residues 1 to 28 (MPTISQLIGSERKRLTRKTKSPALKSCP). At Asp-89 the chain carries 3-methylthioaspartic acid. The disordered stretch occupies residues 104–125 (TAGVKDRRQSRSKYGAKAPKND).

This sequence belongs to the universal ribosomal protein uS12 family. As to quaternary structure, part of the 30S ribosomal subunit. Contacts proteins S8 and S17. May interact with IF1 in the 30S initiation complex.

Functionally, with S4 and S5 plays an important role in translational accuracy. Interacts with and stabilizes bases of the 16S rRNA that are involved in tRNA selection in the A site and with the mRNA backbone. Located at the interface of the 30S and 50S subunits, it traverses the body of the 30S subunit contacting proteins on the other side and probably holding the rRNA structure together. The combined cluster of proteins S8, S12 and S17 appears to hold together the shoulder and platform of the 30S subunit. The protein is Small ribosomal subunit protein uS12 of Prochlorococcus marinus subsp. pastoris (strain CCMP1986 / NIES-2087 / MED4).